We begin with the raw amino-acid sequence, 289 residues long: Cell division protein ZipA (289 aa).

Met1 is a topological domain (periplasmic). The helical transmembrane segment at 2 to 22 (EIGLREWLIVIGIIVIAGILF) threads the bilayer. Residues 23-289 (DGWRRMRGSK…ERRALTQRRG (267 aa)) are Cytoplasmic-facing. The segment at 48–141 (DEEETTSAEV…KPAQRITEDK (94 aa)) is disordered. 3 stretches are compositionally biased toward basic and acidic residues: residues 64 to 77 (LDTH…EHDL), 85 to 106 (REGK…KDEP), and 123 to 141 (GRDD…TEDK).

The protein belongs to the ZipA family. In terms of assembly, interacts with FtsZ via their C-terminal domains.

The protein localises to the cell inner membrane. Its function is as follows. Essential cell division protein that stabilizes the FtsZ protofilaments by cross-linking them and that serves as a cytoplasmic membrane anchor for the Z ring. Also required for the recruitment to the septal ring of downstream cell division proteins. The polypeptide is Cell division protein ZipA (Pseudomonas savastanoi pv. phaseolicola (strain 1448A / Race 6) (Pseudomonas syringae pv. phaseolicola (strain 1448A / Race 6))).